Consider the following 190-residue polypeptide: Dirigent protein 15 (190 aa).

Residues 1 to 19 (MKSTLIIFFTLCLSMAVMA) form the signal peptide. 2 N-linked (GlcNAc...) asparagine glycosylation sites follow: N63 and N128.

The protein belongs to the plant dirigent protein family. In terms of assembly, homodimer.

The protein resides in the secreted. The protein localises to the extracellular space. Its subcellular location is the apoplast. Its function is as follows. Dirigent proteins impart stereoselectivity on the phenoxy radical-coupling reaction, yielding optically active lignans from two molecules of coniferyl alcohol in the biosynthesis of lignans, flavonolignans, and alkaloids and thus plays a central role in plant secondary metabolism. The polypeptide is Dirigent protein 15 (DIR15) (Arabidopsis thaliana (Mouse-ear cress)).